We begin with the raw amino-acid sequence, 125 residues long: MSSCISPESSIISRFTRSHGIDGNVTSILSSSFACRSRSTTNCGLVTTELNCPHSFTSRNNVVKMHDKVISPPALVRTRTSSSVLANASSDSNVDLFMMSIVSSYVCYITVLLRMYTRHKTSFPL.

The helical transmembrane segment at 96-113 (LFMMSIVSSYVCYITVLL) threads the bilayer.

It localises to the membrane. This is an uncharacterized protein from Saccharomyces cerevisiae (strain ATCC 204508 / S288c) (Baker's yeast).